The chain runs to 465 residues: Cysteine--tRNA ligase (465 aa).

C29 is a binding site for Zn(2+). The short motif at 31–41 is the 'HIGH' region element; it reads PTVYNYIHIGN. Residues C209, H234, and E238 each contribute to the Zn(2+) site. The 'KMSKS' region signature appears at 266–270; the sequence is KMSKS. Position 269 (K269) interacts with ATP. A Phosphoserine modification is found at S270.

This sequence belongs to the class-I aminoacyl-tRNA synthetase family. Monomer. Zn(2+) is required as a cofactor.

It is found in the cytoplasm. The catalysed reaction is tRNA(Cys) + L-cysteine + ATP = L-cysteinyl-tRNA(Cys) + AMP + diphosphate. This chain is Cysteine--tRNA ligase, found in Bacillus anthracis (strain A0248).